The primary structure comprises 155 residues: Small ribosomal subunit protein uS7 (155 aa).

This sequence belongs to the universal ribosomal protein uS7 family. As to quaternary structure, part of the 30S ribosomal subunit. Contacts proteins S9 and S11.

One of the primary rRNA binding proteins, it binds directly to 16S rRNA where it nucleates assembly of the head domain of the 30S subunit. Is located at the subunit interface close to the decoding center, probably blocks exit of the E-site tRNA. The chain is Small ribosomal subunit protein uS7 from Mycoplasma mycoides subsp. mycoides SC (strain CCUG 32753 / NCTC 10114 / PG1).